The chain runs to 274 residues: Nuclease (274 aa).

Residues 1–24 (MGICGKLGVAALVALIVGCSPVQS) form the signal peptide. The Proton acceptor role is filled by His-124. Residues Asn-155, Asp-246, Glu-249, Asp-255, Phe-256, Gln-265, and Glu-269 each contribute to the Mn(2+) site.

The protein belongs to the DNA/RNA non-specific endonuclease family. As to quaternary structure, monomer. The cofactor is Mn(2+). Requires Mg(2+) as cofactor. Ca(2+) is required as a cofactor. Co(2+) serves as cofactor. The N-terminus is blocked.

Its subcellular location is the periplasm. Functionally, catalyzes the degradation of both RNA and DNA; has the potential to act as an endonuclease. In Nostoc sp. (strain PCC 7120 / SAG 25.82 / UTEX 2576), this protein is Nuclease (nucA).